The primary structure comprises 128 residues: Small ribosomal subunit protein uS13 (128 aa).

The span at 95 to 118 (GLPVRGQRTHTNARTRKGPKKGLV) shows a compositional bias: basic residues. The segment at 95–128 (GLPVRGQRTHTNARTRKGPKKGLVRKAAAPAPMA) is disordered.

The protein belongs to the universal ribosomal protein uS13 family. In terms of assembly, part of the 30S ribosomal subunit. Forms a loose heterodimer with protein S19. Forms two bridges to the 50S subunit in the 70S ribosome.

Functionally, located at the top of the head of the 30S subunit, it contacts several helices of the 16S rRNA. In the 70S ribosome it contacts the 23S rRNA (bridge B1a) and protein L5 of the 50S subunit (bridge B1b), connecting the 2 subunits; these bridges are implicated in subunit movement. Contacts the tRNAs in the A and P-sites. This Anaeromyxobacter dehalogenans (strain 2CP-1 / ATCC BAA-258) protein is Small ribosomal subunit protein uS13.